The following is a 238-amino-acid chain: CASP-like protein 2BC2 (238 aa).

Over 1-66 (MPSSTYPRRR…FHQKVAVEKR (66 aa)) the chain is Cytoplasmic. Residues 67 to 87 (LKIGEVILRFAMIALALVAAV) traverse the membrane as a helical segment. Residues 88–111 (RVGTDTQTRTIFTIEKKAKYSDMK) lie on the Extracellular side of the membrane. The chain crosses the membrane as a helical span at residues 112–132 (ALVFLVVMNGIVASYSLLQGL). Over 133–148 (RCVLSIYTQSPLTSKP) the chain is Cytoplasmic. The helical transmembrane segment at 149-169 (LAWLIFALDQTMAYFSLAAAA) threads the bilayer. Residues 170 to 200 (AAAESAYLAERGQTEFQWMKVCIFYEKFCHQ) are Extracellular-facing. Residues 201–221 (IGEGLVSTFLVSLSMATVSGM) traverse the membrane as a helical segment. The Cytoplasmic portion of the chain corresponds to 222–238 (SAYHLFRLYGSKGKSIQ).

Belongs to the Casparian strip membrane proteins (CASP) family. As to quaternary structure, homodimer and heterodimers.

The protein resides in the cell membrane. In Picea sitchensis (Sitka spruce), this protein is CASP-like protein 2BC2.